We begin with the raw amino-acid sequence, 1451 residues long: Murinoglobulin-2 (1451 aa).

The signal sequence occupies residues 1–27 (MWKSRRAQLCLFSVLLAFLPSASSLNG). 3 disulfides stabilise this stretch: Cys-48–Cys-86, Cys-251–Cys-276, and Cys-269–Cys-288. A glycan (N-linked (GlcNAc...) asparagine) is linked at Asn-55. N-linked (GlcNAc...) asparagine glycosylation is found at Asn-294, Asn-313, and Asn-500. 3 disulfide bridges follow: Cys-461–Cys-555, Cys-587–Cys-773, and Cys-634–Cys-680. A bait region region spans residues 677-734 (PKICFDSAPMSGPRGKFDLAFSSEVSGTLQKGSSKRPQPEEPPREDPPPKDPLAETIR). The tract at residues 703 to 728 (GTLQKGSSKRPQPEEPPREDPPPKDP) is disordered. Over residues 713-728 (PQPEEPPREDPPPKDP) the composition is skewed to basic and acidic residues. N-linked (GlcNAc...) asparagine glycosylation is found at Asn-749, Asn-776, and Asn-871. Disulfide bonds link Cys-849–Cys-885, Cys-923–Cys-1274, Cys-1081–Cys-1104, and Cys-1298–Cys-1444. The segment at residues 974 to 977 (CGEQ) is a cross-link (isoglutamyl cysteine thioester (Cys-Gln)). A glycan (N-linked (GlcNAc...) asparagine) is linked at Asn-1401.

Belongs to the protease inhibitor I39 (alpha-2-macroglobulin) family. As to quaternary structure, monomer. In terms of tissue distribution, plasma.

It is found in the secreted. Functionally, a proteinase activates the inhibitor by specific proteolysis in the bait region, which, by an unknown mechanism leads to reaction at the cysteinyl-glutamyl internal thiol ester site and to a conformational change, whereby the proteinase is trapped and/or covalently bound to the inhibitor. While in the tetrameric proteinase inhibitors steric inhibition is sufficiently strong, monomeric forms need a covalent linkage between the activated glutamyl residue of the original thiol ester and a terminal amino group of a lysine or another nucleophilic group on the proteinase, for inhibition to be effective. The polypeptide is Murinoglobulin-2 (Mug2) (Mus musculus (Mouse)).